The primary structure comprises 493 residues: Cobyric acid synthase (493 aa).

The 195-residue stretch at 246 to 440 (PIDIAVIKMP…IHGVFDGVVF (195 aa)) folds into the GATase cobBQ-type domain. Cys-326 acts as the Nucleophile in catalysis. Residue His-432 is part of the active site.

This sequence belongs to the CobB/CobQ family. CobQ subfamily.

It participates in cofactor biosynthesis; adenosylcobalamin biosynthesis. Catalyzes amidations at positions B, D, E, and G on adenosylcobyrinic A,C-diamide. NH(2) groups are provided by glutamine, and one molecule of ATP is hydrogenolyzed for each amidation. This is Cobyric acid synthase from Clostridium botulinum (strain ATCC 19397 / Type A).